A 537-amino-acid polypeptide reads, in one-letter code: O-phosphoserine--tRNA(Cys) ligase (537 aa).

Substrate contacts are provided by residues 186-188 (HMT), 231-233 (SAS), 273-274 (YY), and asparagine 317.

Belongs to the class-II aminoacyl-tRNA synthetase family. O-phosphoseryl-tRNA(Cys) synthetase subfamily. As to quaternary structure, homotetramer. Interacts with SepCysS.

It carries out the reaction tRNA(Cys) + O-phospho-L-serine + ATP = O-phospho-L-seryl-tRNA(Cys) + AMP + diphosphate. Catalyzes the attachment of O-phosphoserine (Sep) to tRNA(Cys). This is O-phosphoserine--tRNA(Cys) ligase from Methanococcus vannielii (strain ATCC 35089 / DSM 1224 / JCM 13029 / OCM 148 / SB).